A 154-amino-acid chain; its full sequence is Holo-[acyl-carrier-protein] synthase (154 aa).

Mg(2+) contacts are provided by Asp8 and Glu57.

The protein belongs to the P-Pant transferase superfamily. AcpS family. Mg(2+) serves as cofactor.

The protein resides in the cytoplasm. It carries out the reaction apo-[ACP] + CoA = holo-[ACP] + adenosine 3',5'-bisphosphate + H(+). In terms of biological role, transfers the 4'-phosphopantetheine moiety from coenzyme A to a Ser of acyl-carrier-protein. This chain is Holo-[acyl-carrier-protein] synthase, found in Nitrosococcus oceani (strain ATCC 19707 / BCRC 17464 / JCM 30415 / NCIMB 11848 / C-107).